The following is a 428-amino-acid chain: MQLLTIGINHHTAPVALRERVAFPLEQIKPALDTFKSIWLGPSARTAPEAAILSTCNRTELYCATDDQAAREAAIQWLSRYHNLPIGELAPHVYALPQSEAVRHAFRVASGLDSMVLGETQIVGQMKDAVRTASEAGALGTYLNQLFQRTFAVAKEVRSTTEIGAQSVSMAAAAVRLAQRIFDKVANQRVLFIGAGEMIELCATHFAAQQPKELVVANRTAERGTRLAERFNGRAIPLSELPSRMHEFDIIVSCTASTLPIIGLGAVERAVKARRHRPIFMVDLAVPRDIEPEVGQLEDVFLYTVDDLGAIVREGNASRQAAVAQAEAIIETRVQNFMQWLDARSIVPVIRHMHTQADVLRRAEVERAQKMLARGDDPAAVLEALSQALTNKLIHGPTHALNRASSENRDTLIELMSGFYKHSGSTER.

Residues 55–58 (TCNR), Ser-114, 119–121 (ETQ), and Gln-125 each bind substrate. Cys-56 serves as the catalytic Nucleophile. NADP(+) is bound at residue 194 to 199 (GAGEMI).

Belongs to the glutamyl-tRNA reductase family. In terms of assembly, homodimer.

It catalyses the reaction (S)-4-amino-5-oxopentanoate + tRNA(Glu) + NADP(+) = L-glutamyl-tRNA(Glu) + NADPH + H(+). Its pathway is porphyrin-containing compound metabolism; protoporphyrin-IX biosynthesis; 5-aminolevulinate from L-glutamyl-tRNA(Glu): step 1/2. In terms of biological role, catalyzes the NADPH-dependent reduction of glutamyl-tRNA(Glu) to glutamate 1-semialdehyde (GSA). This Paraburkholderia xenovorans (strain LB400) protein is Glutamyl-tRNA reductase.